A 601-amino-acid polypeptide reads, in one-letter code: NADH-quinone oxidoreductase subunit C/D (601 aa).

The interval 1-192 (MIVPDLVADA…PPYSLTEDQE (192 aa)) is NADH dehydrogenase I subunit C. Residues 216–601 (DFMFLNLGPN…IDFVMADVDR (386 aa)) form an NADH dehydrogenase I subunit D region.

The protein in the N-terminal section; belongs to the complex I 30 kDa subunit family. This sequence in the C-terminal section; belongs to the complex I 49 kDa subunit family. NDH-1 is composed of 13 different subunits. Subunits NuoB, CD, E, F, and G constitute the peripheral sector of the complex.

It is found in the cell inner membrane. It catalyses the reaction a quinone + NADH + 5 H(+)(in) = a quinol + NAD(+) + 4 H(+)(out). Functionally, NDH-1 shuttles electrons from NADH, via FMN and iron-sulfur (Fe-S) centers, to quinones in the respiratory chain. The immediate electron acceptor for the enzyme in this species is believed to be ubiquinone. Couples the redox reaction to proton translocation (for every two electrons transferred, four hydrogen ions are translocated across the cytoplasmic membrane), and thus conserves the redox energy in a proton gradient. The protein is NADH-quinone oxidoreductase subunit C/D of Gluconacetobacter diazotrophicus (strain ATCC 49037 / DSM 5601 / CCUG 37298 / CIP 103539 / LMG 7603 / PAl5).